The primary structure comprises 139 residues: D-ribose pyranase (139 aa).

Histidine 20 functions as the Proton donor in the catalytic mechanism. Substrate is bound by residues aspartate 28, histidine 106, and 128–130 (YAN).

This sequence belongs to the RbsD / FucU family. RbsD subfamily. As to quaternary structure, homodecamer.

Its subcellular location is the cytoplasm. It catalyses the reaction beta-D-ribopyranose = beta-D-ribofuranose. Its pathway is carbohydrate metabolism; D-ribose degradation; D-ribose 5-phosphate from beta-D-ribopyranose: step 1/2. Functionally, catalyzes the interconversion of beta-pyran and beta-furan forms of D-ribose. The protein is D-ribose pyranase of Haemophilus influenzae (strain PittGG).